The following is a 134-amino-acid chain: Translation initiation factor 2 subunit beta (134 aa).

Over residues 1–12 (MEYDDMLDRAME) the composition is skewed to basic and acidic residues. Residues 1 to 28 (MEYDDMLDRAMEETPEIDGTSERFEVPD) are disordered.

This sequence belongs to the eIF-2-beta/eIF-5 family. In terms of assembly, heterotrimer composed of an alpha, a beta and a gamma chain.

Its function is as follows. eIF-2 functions in the early steps of protein synthesis by forming a ternary complex with GTP and initiator tRNA. The sequence is that of Translation initiation factor 2 subunit beta from Haloarcula marismortui (strain ATCC 43049 / DSM 3752 / JCM 8966 / VKM B-1809) (Halobacterium marismortui).